Reading from the N-terminus, the 131-residue chain is Large ribosomal subunit protein bL12 (131 aa).

Belongs to the bacterial ribosomal protein bL12 family. As to quaternary structure, homodimer. Part of the ribosomal stalk of the 50S ribosomal subunit. Forms a multimeric L10(L12)X complex, where L10 forms an elongated spine to which 2 to 4 L12 dimers bind in a sequential fashion. Binds GTP-bound translation factors.

In terms of biological role, forms part of the ribosomal stalk which helps the ribosome interact with GTP-bound translation factors. Is thus essential for accurate translation. The sequence is that of Large ribosomal subunit protein bL12 from Prochlorococcus marinus (strain NATL1A).